The chain runs to 178 residues: Caveolin-1 (178 aa).

Ser-2 carries the N-acetylserine modification. Ser-2 is modified (phosphoserine). Residues 2 to 94 (SGGKYVDAEG…WKASFTTFTV (93 aa)) are required for homooligomerization. At 2-104 (SGGKYVDAEG…TKYWFYRLLS (103 aa)) the chain is on the cytoplasmic side. Residue Lys-5 is modified to N6-acetyllysine; alternate. Lys-5 is covalently cross-linked (Glycyl lysine isopeptide (Lys-Gly) (interchain with G-Cter in ubiquitin); alternate). A Phosphotyrosine modification is found at Tyr-6. The residue at position 14 (Tyr-14) is a Phosphotyrosine; by ABL1. Tyr-25 is subject to Phosphotyrosine. Glycyl lysine isopeptide (Lys-Gly) (interchain with G-Cter in ubiquitin) cross-links involve residues Lys-26, Lys-30, Lys-39, Lys-47, and Lys-57. Residues 82–94 (DGIWKASFTTFTV) form an interaction with CAVIN3 region. The helical intramembrane region spans 105–125 (ALLGIPLALLWGIYFAILSFL). The Cytoplasmic portion of the chain corresponds to 126-178 (HIWAVVPCIRSYLIEIQCISRVYSICIHTFCDPLFEAIGKVFSNIRATVQKEI). Residues 131-142 (VPCIRSYLIEIQ) are interacts with SPRY1, SPRY2, SPRY3 and SPRY4. Residues Cys-133, Cys-143, and Cys-156 are each lipidated (S-palmitoyl cysteine). Residues 149–160 (SICIHTFCDPLF) form an interacts with SPRY1, SPRY2, and SPRY4 region. Residues 167–178 (FSNIRATVQKEI) are interacts with SPRY1, SPRY2, SPRY3 and SPRY4.

Belongs to the caveolin family. Homooligomer. Interacts with GLIPR2. Interacts with NOSTRIN. Interacts with SNAP25 and STX1A. Interacts (via the N-terminus) with DPP4; the interaction is direct. Interacts with CTNNB1, CDH1 and JUP. Interacts with PACSIN2; this interaction induces membrane tubulation. Interacts with SLC7A9. Interacts with BMX and BTK. Interacts with TGFBR1. Interacts with CAVIN3 (via leucine-zipper domain) in a cholesterol-sensitive manner. Interacts with CAVIN1. Interacts with EHD2 in a cholesterol-dependent manner. Forms a ternary complex with UBXN6 and VCP; mediates CAV1 targeting to lysosomes for degradation. Interacts with ABCG1; this interaction regulates ABCG1-mediated cholesterol efflux. Interacts with NEU3; this interaction enhances NEU3 sialidase activity within caveola. Interacts (via C-terminus) with SPRY1, SPRY2 (via C-terminus), SPRY3, and SPRY4. Interacts with IGFBP5; this interaction allows trafficking of IGFBP5 from the plasma membrane to the nucleus. In terms of processing, phosphorylated at Tyr-14 by ABL1 in response to oxidative stress. Post-translationally, ubiquitinated. Undergo monoubiquitination and multi- and/or polyubiquitination. Monoubiquitination of N-terminal lysines promotes integration in a ternary complex with UBXN6 and VCP which promotes oligomeric CAV1 targeting to lysosomes for degradation. Ubiquitinated by ZNRF1; leading to degradation and modulation of the TLR4-mediated immune response.

It localises to the golgi apparatus membrane. The protein resides in the cell membrane. The protein localises to the membrane. Its subcellular location is the caveola. It is found in the membrane raft. May act as a scaffolding protein within caveolar membranes. Forms a stable heterooligomeric complex with CAV2 that targets to lipid rafts and drives caveolae formation. Mediates the recruitment of CAVIN proteins (CAVIN1/2/3/4) to the caveolae. Interacts directly with G-protein alpha subunits and can functionally regulate their activity. Involved in the costimulatory signal essential for T-cell receptor (TCR)-mediated T-cell activation. Its binding to DPP4 induces T-cell proliferation and NF-kappa-B activation in a T-cell receptor/CD3-dependent manner. Recruits CTNNB1 to caveolar membranes and may regulate CTNNB1-mediated signaling through the Wnt pathway. Negatively regulates TGFB1-mediated activation of SMAD2/3 by mediating the internalization of TGFBR1 from membrane rafts leading to its subsequent degradation. Binds 20(S)-hydroxycholesterol (20(S)-OHC). The polypeptide is Caveolin-1 (CAV1) (Ornithorhynchus anatinus (Duckbill platypus)).